We begin with the raw amino-acid sequence, 288 residues long: Phosphatidylserine decarboxylase proenzyme (288 aa).

Active-site charge relay system; for autoendoproteolytic cleavage activity residues include Asp-95, His-152, and Ser-255. Ser-255 serves as the catalytic Schiff-base intermediate with substrate; via pyruvic acid; for decarboxylase activity. At Ser-255 the chain carries Pyruvic acid (Ser); by autocatalysis.

The protein belongs to the phosphatidylserine decarboxylase family. PSD-B subfamily. Prokaryotic type I sub-subfamily. As to quaternary structure, heterodimer of a large membrane-associated beta subunit and a small pyruvoyl-containing alpha subunit. The cofactor is pyruvate. Post-translationally, is synthesized initially as an inactive proenzyme. Formation of the active enzyme involves a self-maturation process in which the active site pyruvoyl group is generated from an internal serine residue via an autocatalytic post-translational modification. Two non-identical subunits are generated from the proenzyme in this reaction, and the pyruvate is formed at the N-terminus of the alpha chain, which is derived from the carboxyl end of the proenzyme. The autoendoproteolytic cleavage occurs by a canonical serine protease mechanism, in which the side chain hydroxyl group of the serine supplies its oxygen atom to form the C-terminus of the beta chain, while the remainder of the serine residue undergoes an oxidative deamination to produce ammonia and the pyruvoyl prosthetic group on the alpha chain. During this reaction, the Ser that is part of the protease active site of the proenzyme becomes the pyruvoyl prosthetic group, which constitutes an essential element of the active site of the mature decarboxylase.

Its subcellular location is the cell membrane. It catalyses the reaction a 1,2-diacyl-sn-glycero-3-phospho-L-serine + H(+) = a 1,2-diacyl-sn-glycero-3-phosphoethanolamine + CO2. It participates in phospholipid metabolism; phosphatidylethanolamine biosynthesis; phosphatidylethanolamine from CDP-diacylglycerol: step 2/2. In terms of biological role, catalyzes the formation of phosphatidylethanolamine (PtdEtn) from phosphatidylserine (PtdSer). The sequence is that of Phosphatidylserine decarboxylase proenzyme from Methylococcus capsulatus (strain ATCC 33009 / NCIMB 11132 / Bath).